Consider the following 260-residue polypeptide: NH(3)-dependent NAD(+) synthetase (260 aa).

31–38 contributes to the ATP binding site; sequence GLSGGLDS. Residue D37 coordinates Mg(2+). R112 lines the deamido-NAD(+) pocket. T132 contributes to the ATP binding site. Residue E137 coordinates Mg(2+). ATP contacts are provided by K161 and S183.

This sequence belongs to the NAD synthetase family. Homodimer.

The enzyme catalyses deamido-NAD(+) + NH4(+) + ATP = AMP + diphosphate + NAD(+) + H(+). Its pathway is cofactor biosynthesis; NAD(+) biosynthesis; NAD(+) from deamido-NAD(+) (ammonia route): step 1/1. In terms of biological role, catalyzes the ATP-dependent amidation of deamido-NAD to form NAD. Uses ammonia as a nitrogen source. The protein is NH(3)-dependent NAD(+) synthetase of Helicobacter pylori (strain ATCC 700392 / 26695) (Campylobacter pylori).